Here is a 368-residue protein sequence, read N- to C-terminus: Molybdenum import ATP-binding protein ModC (368 aa).

Residues 1-231 (MKGLQVAFKQ…QAMRPWQSFS (231 aa)) form the ABC transporter domain. Residue 33 to 40 (GRSGAGKT) participates in ATP binding. In terms of domain architecture, Mop spans 292 to 363 (KTSIRNIIEA…IKGVSVTQRD (72 aa)).

Belongs to the ABC transporter superfamily. Molybdate importer (TC 3.A.1.8) family. As to quaternary structure, the complex is composed of two ATP-binding proteins (ModC), two transmembrane proteins (ModB) and a solute-binding protein (ModA).

The protein resides in the cell inner membrane. The enzyme catalyses molybdate(out) + ATP + H2O = molybdate(in) + ADP + phosphate + H(+). In terms of biological role, part of the ABC transporter complex ModABC involved in molybdenum import. Responsible for energy coupling to the transport system. This chain is Molybdenum import ATP-binding protein ModC, found in Vibrio vulnificus (strain YJ016).